The chain runs to 318 residues: Aspartate carbamoyltransferase catalytic subunit (318 aa).

2 residues coordinate carbamoyl phosphate: Arg-59 and Thr-60. Lys-87 provides a ligand contact to L-aspartate. Residues Arg-109, His-137, and Gln-140 each contribute to the carbamoyl phosphate site. Residues Arg-170 and Arg-224 each coordinate L-aspartate. 2 residues coordinate carbamoyl phosphate: Gly-265 and Pro-266.

The protein belongs to the aspartate/ornithine carbamoyltransferase superfamily. ATCase family. Heterododecamer (2C3:3R2) of six catalytic PyrB chains organized as two trimers (C3), and six regulatory PyrI chains organized as three dimers (R2).

It carries out the reaction carbamoyl phosphate + L-aspartate = N-carbamoyl-L-aspartate + phosphate + H(+). Its pathway is pyrimidine metabolism; UMP biosynthesis via de novo pathway; (S)-dihydroorotate from bicarbonate: step 2/3. Catalyzes the condensation of carbamoyl phosphate and aspartate to form carbamoyl aspartate and inorganic phosphate, the committed step in the de novo pyrimidine nucleotide biosynthesis pathway. This is Aspartate carbamoyltransferase catalytic subunit from Rhizobium etli (strain ATCC 51251 / DSM 11541 / JCM 21823 / NBRC 15573 / CFN 42).